Reading from the N-terminus, the 102-residue chain is Small ribosomal subunit protein bS18 (102 aa).

It belongs to the bacterial ribosomal protein bS18 family. In terms of assembly, part of the 30S ribosomal subunit. Forms a tight heterodimer with protein bS6.

Functionally, binds as a heterodimer with protein bS6 to the central domain of the 16S rRNA, where it helps stabilize the platform of the 30S subunit. The polypeptide is Small ribosomal subunit protein bS18 (Orientia tsutsugamushi (strain Ikeda) (Rickettsia tsutsugamushi)).